A 274-amino-acid polypeptide reads, in one-letter code: Probable WRKY transcription factor 49 (274 aa).

Residues 108 to 173 (NSNGMCDDGY…YEGFHFHYTY (66 aa)) constitute a DNA-binding region (WRKY). Residues 188 to 228 (KTKIHKHNAQDMNKKSQTQEESKEAQLGELTNQNHPVNKAQ) form a disordered region. Residues 193–222 (KHNAQDMNKKSQTQEESKEAQLGELTNQNH) are a coiled coil. Over residues 195 to 213 (NAQDMNKKSQTQEESKEAQ) the composition is skewed to basic and acidic residues. A compositionally biased stretch (polar residues) spans 216–228 (ELTNQNHPVNKAQ).

It belongs to the WRKY group II-c family.

It localises to the nucleus. Its function is as follows. Transcription factor. Interacts specifically with the W box (5'-(T)TGAC[CT]-3'), a frequently occurring elicitor-responsive cis-acting element. The protein is Probable WRKY transcription factor 49 (WRKY49) of Arabidopsis thaliana (Mouse-ear cress).